The primary structure comprises 465 residues: Uronate isomerase (465 aa).

The protein belongs to the metallo-dependent hydrolases superfamily. Uronate isomerase family.

It carries out the reaction D-glucuronate = D-fructuronate. The catalysed reaction is aldehydo-D-galacturonate = keto-D-tagaturonate. It functions in the pathway carbohydrate metabolism; pentose and glucuronate interconversion. The chain is Uronate isomerase from Streptococcus equi subsp. zooepidemicus (strain H70).